The following is a 985-amino-acid chain: UPF0182 protein cgR_0895 (985 aa).

7 consecutive transmembrane segments (helical) span residues valine 19–phenylalanine 39, isoleucine 63–phenylalanine 83, valine 115–tryptophan 135, serine 176–isoleucine 196, threonine 215–aspartate 235, lysine 262–leucine 282, and leucine 290–leucine 310. The disordered stretch occupies residues alanine 906–glutamate 944. The span at aspartate 929 to proline 939 shows a compositional bias: low complexity.

It belongs to the UPF0182 family.

The protein resides in the cell membrane. This chain is UPF0182 protein cgR_0895, found in Corynebacterium glutamicum (strain R).